Consider the following 173-residue polypeptide: Large ribosomal subunit protein uL10 (173 aa).

Belongs to the universal ribosomal protein uL10 family. In terms of assembly, part of the ribosomal stalk of the 50S ribosomal subunit. The N-terminus interacts with L11 and the large rRNA to form the base of the stalk. The C-terminus forms an elongated spine to which L12 dimers bind in a sequential fashion forming a multimeric L10(L12)X complex.

Its function is as follows. Forms part of the ribosomal stalk, playing a central role in the interaction of the ribosome with GTP-bound translation factors. The sequence is that of Large ribosomal subunit protein uL10 (rplJ) from Synechocystis sp. (strain ATCC 27184 / PCC 6803 / Kazusa).